The sequence spans 432 residues: ATP-dependent RNA helicase RhlB (432 aa).

The Q motif motif lies at 9-37 (QNFADLGLQPQVIDGLNAKGFIKCTPIQA). The region spanning 40–219 (LPVLLAGQDI…FEHMQEPEHV (180 aa)) is the Helicase ATP-binding domain. 53–60 (AQTGTGKT) contributes to the ATP binding site. The DEAD box signature appears at 165 to 168 (DEAD). A Helicase C-terminal domain is found at 245–390 (ALLQTLIEEE…QSDYDASALL (146 aa)). The tract at residues 396 to 432 (PLRLQRRPQQNRRNNNGQRQGGNRKHTRPRQPRNTQS) is disordered. A compositionally biased stretch (basic residues) spans 417–426 (GNRKHTRPRQ).

Belongs to the DEAD box helicase family. RhlB subfamily. Component of the RNA degradosome, which is a multiprotein complex involved in RNA processing and mRNA degradation.

It is found in the cytoplasm. It carries out the reaction ATP + H2O = ADP + phosphate + H(+). In terms of biological role, DEAD-box RNA helicase involved in RNA degradation. Has RNA-dependent ATPase activity and unwinds double-stranded RNA. The polypeptide is ATP-dependent RNA helicase RhlB (Aliivibrio fischeri (strain ATCC 700601 / ES114) (Vibrio fischeri)).